Reading from the N-terminus, the 266-residue chain is GTP cyclohydrolase FolE2 (266 aa).

Belongs to the GTP cyclohydrolase IV family.

The catalysed reaction is GTP + H2O = 7,8-dihydroneopterin 3'-triphosphate + formate + H(+). It functions in the pathway cofactor biosynthesis; 7,8-dihydroneopterin triphosphate biosynthesis; 7,8-dihydroneopterin triphosphate from GTP: step 1/1. In terms of biological role, converts GTP to 7,8-dihydroneopterin triphosphate. This is GTP cyclohydrolase FolE2 from Burkholderia mallei (strain ATCC 23344).